The chain runs to 334 residues: Holliday junction branch migration complex subunit RuvB (334 aa).

The segment at 4-184 is large ATPase domain (RuvB-L); sequence ADRLIQPQLQ…FGIPLRLEFY (181 aa). ATP-binding positions include Arg-24, Gly-65, Lys-68, Thr-69, Thr-70, 131 to 133, Arg-174, Tyr-184, and Arg-221; that span reads EDY. Mg(2+) is bound at residue Thr-69. Residues 185 to 255 are small ATPAse domain (RuvB-S); it reads NVKDLSTIVS…VAEHALDLLD (71 aa). The interval 258 to 334 is head domain (RuvB-H); it reads GEGFDYMDRK…YLHFGMIKPE (77 aa). DNA-binding residues include Arg-294, Arg-313, and Arg-318.

The protein belongs to the RuvB family. Homohexamer. Forms an RuvA(8)-RuvB(12)-Holliday junction (HJ) complex. HJ DNA is sandwiched between 2 RuvA tetramers; dsDNA enters through RuvA and exits via RuvB. An RuvB hexamer assembles on each DNA strand where it exits the tetramer. Each RuvB hexamer is contacted by two RuvA subunits (via domain III) on 2 adjacent RuvB subunits; this complex drives branch migration. In the full resolvosome a probable DNA-RuvA(4)-RuvB(12)-RuvC(2) complex forms which resolves the HJ.

Its subcellular location is the cytoplasm. The enzyme catalyses ATP + H2O = ADP + phosphate + H(+). The RuvA-RuvB-RuvC complex processes Holliday junction (HJ) DNA during genetic recombination and DNA repair, while the RuvA-RuvB complex plays an important role in the rescue of blocked DNA replication forks via replication fork reversal (RFR). RuvA specifically binds to HJ cruciform DNA, conferring on it an open structure. The RuvB hexamer acts as an ATP-dependent pump, pulling dsDNA into and through the RuvAB complex. RuvB forms 2 homohexamers on either side of HJ DNA bound by 1 or 2 RuvA tetramers; 4 subunits per hexamer contact DNA at a time. Coordinated motions by a converter formed by DNA-disengaged RuvB subunits stimulates ATP hydrolysis and nucleotide exchange. Immobilization of the converter enables RuvB to convert the ATP-contained energy into a lever motion, pulling 2 nucleotides of DNA out of the RuvA tetramer per ATP hydrolyzed, thus driving DNA branch migration. The RuvB motors rotate together with the DNA substrate, which together with the progressing nucleotide cycle form the mechanistic basis for DNA recombination by continuous HJ branch migration. Branch migration allows RuvC to scan DNA until it finds its consensus sequence, where it cleaves and resolves cruciform DNA. The polypeptide is Holliday junction branch migration complex subunit RuvB (Shewanella sp. (strain MR-7)).